Here is a 678-residue protein sequence, read N- to C-terminus: Chloride channel protein ClC-Kb (678 aa).

The Cytoplasmic segment spans residues 1-50; that stretch reads MEELVGLREGSSGNPVALRELWSPCPRLRRGIRGGLEWLKQKLFRVGEDW. Helical transmembrane passes span 51-82 and 91-111; these read YFLM…KWLY and LRYL…SGFS. The helical intramembrane region spans 116-127; it reads PFSGGSGIPELK. Residue S121 coordinates chloride. 2 consecutive transmembrane segments (helical) span residues 141–160 and 161–180; these read IKNF…TGST and LFLG…AAYL. Residues 203 to 224 constitute an intramembrane region (helical); it reads AGAAVGVATVFAAPFSGVLFCI. Residues 236-255 form a helical membrane-spanning segment; that stretch reads YWRGFFAATCGAFMFRLLAV. Ca(2+) is bound by residues E259, E261, D278, and E281. Transmembrane regions (helical) follow at residues 282–310 and 325–342; these read IFFF…LAFT and PLYA…TYPP. The segment at residues 349–360 is an intramembrane region (helical); it reads ASRLSMREHLDT. N364 carries an N-linked (GlcNAc...) asparagine glycan. A run of 2 helical transmembrane segments spans residues 400-420 and 421-440; these read GTLA…TTIP and MPAG…GRLL. A chloride-binding site is contributed by F426. The segment at residues 464–496 is an intramembrane region (helical); it reads GGYALAGAAAFSGAVTHSISTALLAFELTGQIV. The chain crosses the membrane as a helical span at residues 500–520; the sequence is PVLMAVLAANAIAQSCQPSFY. At 521-678 the chain is on the cytoplasmic side; it reads DGTIMVKKLP…SWVERQHTGF (158 aa). CBS domains lie at 551–612 and 620–678; these read MRRA…ARAS and DILA…HTGF.

The protein belongs to the chloride channel (TC 2.A.49) family. CLCNKB subfamily. As to quaternary structure, homodimer. Interacts with BSND. Post-translationally, N-glycosylated. In terms of tissue distribution, expressed predominantly in the kidney.

The protein resides in the basolateral cell membrane. It carries out the reaction chloride(in) = chloride(out). It catalyses the reaction iodide(out) = iodide(in). The catalysed reaction is nitrate(in) = nitrate(out). The enzyme catalyses bromide(in) = bromide(out). In terms of biological role, anion-selective channel permeable to small monovalent anions with ion selectivity for chloride &gt; bromide &gt; nitrate &gt; iodide. Forms a homodimeric channel where each subunit has its own ion conduction pathway. May conduct double-barreled currents controlled by two types of gates, two fast gates that control each subunit independently and a slow common gate that opens and shuts off both subunits simultaneously. Assembles with the regulatory subunit BSND/Barttin for sorting at the basolateral plasma membrane domain and functional switch to the ion conducting state. CLCNKB:BSND channels display mostly a linear current-voltage relationship controlled by common gate. Mediates chloride conductance along nephron segments, namely the thick ascending limb of Henle's loop, convoluted tubule and the collecting duct, contributing to the maintenance of systemic acid-base and electrolyte homeostasis. Conducts chloride currents in the stria vascularis of the inner ear to establish the endocochlear potential necessary for normal hearing. The chain is Chloride channel protein ClC-Kb (CLCNKB) from Oryctolagus cuniculus (Rabbit).